Consider the following 306-residue polypeptide: Pantothenate kinase (306 aa).

Residue 91–98 participates in ATP binding; that stretch reads GSVAVGKS.

Belongs to the prokaryotic pantothenate kinase family.

It is found in the cytoplasm. It carries out the reaction (R)-pantothenate + ATP = (R)-4'-phosphopantothenate + ADP + H(+). It functions in the pathway cofactor biosynthesis; coenzyme A biosynthesis; CoA from (R)-pantothenate: step 1/5. The sequence is that of Pantothenate kinase from Streptococcus pneumoniae serotype 2 (strain D39 / NCTC 7466).